The sequence spans 392 residues: DNA primase small subunit PriS (392 aa).

Residues Asp98, Asp100, and Asp295 contribute to the active site.

It belongs to the eukaryotic-type primase small subunit family. As to quaternary structure, heterodimer of a small subunit (PriS) and a large subunit (PriL). Mg(2+) serves as cofactor. It depends on Mn(2+) as a cofactor.

Its function is as follows. Catalytic subunit of DNA primase, an RNA polymerase that catalyzes the synthesis of short RNA molecules used as primers for DNA polymerase during DNA replication. The small subunit contains the primase catalytic core and has DNA synthesis activity on its own. Binding to the large subunit stabilizes and modulates the activity, increasing the rate of DNA synthesis while decreasing the length of the DNA fragments, and conferring RNA synthesis capability. The DNA polymerase activity may enable DNA primase to also catalyze primer extension after primer synthesis. May also play a role in DNA repair. The protein is DNA primase small subunit PriS of Haloarcula marismortui (strain ATCC 43049 / DSM 3752 / JCM 8966 / VKM B-1809) (Halobacterium marismortui).